The sequence spans 347 residues: Probable zinc transporter 8 (347 aa).

An N-terminal signal peptide occupies residues 1–27; that stretch reads MATTTQHMNQIFLVLLLISFAISPAIS. The Extracellular portion of the chain corresponds to 28–51; that stretch reads TVPKECETDSTDSCIDKTKALPLK. Residues 52–72 traverse the membrane as a helical segment; that stretch reads IVAIVAILVTSMIGVAAPLFS. At 73-83 the chain is on the cytoplasmic side; that stretch reads RYVTFLHPDGK. Residues 84–104 traverse the membrane as a helical segment; it reads IFMIIKCFASGIILGTGFMHV. At 105-124 the chain is on the extracellular side; the sequence is LPDSFEMLSSPCLEDNPWHK. A helical transmembrane segment spans residues 125-145; that stretch reads FPFTGFVAMLSGLVTLAIDSI. The Cytoplasmic portion of the chain corresponds to 146-192; it reads ATSLYTKKAVADDSEERTTPMIIQIDHLPLTTKERSSTCSKQLLRYR. The helical transmembrane segment at 193–213 threads the bilayer; the sequence is VIATVLELGIIVHSVVIGLSL. At 214–224 the chain is on the extracellular side; the sequence is GATNDTCTIKG. Residues 225–245 form a helical membrane-spanning segment; sequence LIAALCFHQMFEGMGLGGCIL. The Cytoplasmic portion of the chain corresponds to 246–254; it reads QAEYTNVKK. A helical transmembrane segment spans residues 255–275; that stretch reads FVMAFFFAVTTPSGIALGIAL. The Extracellular portion of the chain corresponds to 276 to 286; sequence SSVYKDNSPTA. The chain crosses the membrane as a helical span at residues 287–307; the sequence is LITVGLLNACSAGLLIYMALV. Residues 308-326 lie on the Cytoplasmic side of the membrane; the sequence is DLLAAEFMGSMLQRSVKLQ. The chain crosses the membrane as a helical span at residues 327–347; it reads LNCFGAALLGCGGMSVLAKWA.

Belongs to the ZIP transporter (TC 2.A.5) family.

It is found in the cell membrane. Functionally, probably mediates zinc uptake from the rhizosphere. This is Probable zinc transporter 8 (ZIP8) from Arabidopsis thaliana (Mouse-ear cress).